The primary structure comprises 469 residues: 3-isopropylmalate dehydratase large subunit (469 aa).

Residues Cys-350, Cys-410, and Cys-413 each contribute to the [4Fe-4S] cluster site.

This sequence belongs to the aconitase/IPM isomerase family. LeuC type 1 subfamily. Heterodimer of LeuC and LeuD. It depends on [4Fe-4S] cluster as a cofactor.

It catalyses the reaction (2R,3S)-3-isopropylmalate = (2S)-2-isopropylmalate. Its pathway is amino-acid biosynthesis; L-leucine biosynthesis; L-leucine from 3-methyl-2-oxobutanoate: step 2/4. Catalyzes the isomerization between 2-isopropylmalate and 3-isopropylmalate, via the formation of 2-isopropylmaleate. The protein is 3-isopropylmalate dehydratase large subunit of Brucella anthropi (strain ATCC 49188 / DSM 6882 / CCUG 24695 / JCM 21032 / LMG 3331 / NBRC 15819 / NCTC 12168 / Alc 37) (Ochrobactrum anthropi).